The chain runs to 106 residues: Nucleoid-associated protein RPB_0667 (106 aa).

The protein belongs to the YbaB/EbfC family. In terms of assembly, homodimer.

Its subcellular location is the cytoplasm. The protein localises to the nucleoid. In terms of biological role, binds to DNA and alters its conformation. May be involved in regulation of gene expression, nucleoid organization and DNA protection. The chain is Nucleoid-associated protein RPB_0667 from Rhodopseudomonas palustris (strain HaA2).